The primary structure comprises 307 residues: UDP-N-acetylenolpyruvoylglucosamine reductase (307 aa).

One can recognise an FAD-binding PCMH-type domain in the interval 34 to 198 (TGGNADFYLS…LEAAFTLEPG (165 aa)). The active site involves arginine 177. Serine 227 acts as the Proton donor in catalysis. Glutamate 297 is a catalytic residue.

Belongs to the MurB family. FAD serves as cofactor.

It localises to the cytoplasm. The enzyme catalyses UDP-N-acetyl-alpha-D-muramate + NADP(+) = UDP-N-acetyl-3-O-(1-carboxyvinyl)-alpha-D-glucosamine + NADPH + H(+). The protein operates within cell wall biogenesis; peptidoglycan biosynthesis. Cell wall formation. This is UDP-N-acetylenolpyruvoylglucosamine reductase from Staphylococcus haemolyticus (strain JCSC1435).